The primary structure comprises 151 residues: Ribosome maturation factor RimP (151 aa).

This sequence belongs to the RimP family.

Its subcellular location is the cytoplasm. Its function is as follows. Required for maturation of 30S ribosomal subunits. This is Ribosome maturation factor RimP from Mannheimia succiniciproducens (strain KCTC 0769BP / MBEL55E).